The chain runs to 72 residues: MKQGIHPEYKEITATCSCGNIIKTKSTLCENIHIDVCSSCHPFYTGKQKVLDTGGRIDRFKKRFGGRMGRSS.

Residues Cys-16, Cys-18, Cys-37, and Cys-40 each coordinate Zn(2+).

It belongs to the bacterial ribosomal protein bL31 family. Type A subfamily. Part of the 50S ribosomal subunit. The cofactor is Zn(2+).

In terms of biological role, binds the 23S rRNA. This is Large ribosomal subunit protein bL31 from Hahella chejuensis (strain KCTC 2396).